The following is a 272-amino-acid chain: Cyanophycinase (272 aa).

Catalysis depends on charge relay system residues Ser132, Glu150, and His174.

The protein belongs to the peptidase S51 family.

The catalysed reaction is [L-4-(L-arginin-2-N-yl)aspartate](n) + H2O = [L-4-(L-arginin-2-N-yl)aspartate](n-1) + L-4-(L-arginin-2-N-yl)aspartate. Exopeptidase that catalyzes the hydrolytic cleavage of multi-L-arginyl-poly-L-aspartic acid (cyanophycin; a water-insoluble reserve polymer) into aspartate-arginine dipeptides. The sequence is that of Cyanophycinase (cphB) from Geminocystis herdmanii (strain PCC 6308) (Synechocystis sp. (strain PCC 6308)).